Reading from the N-terminus, the 286-residue chain is Master replication protein (286 aa).

Positions 2 to 96 (ARQVICWCFT…LEGPWEYGEF (95 aa)) constitute a CRESS-DNA virus Rep endonuclease domain. The short motif at 9–12 (CFTL) is the RCR-1 element. Residues Glu33 and His41 each contribute to the a divalent metal cation site. An RCR-2 motif is present at residues 41–43 (HFQ). The Nuclear localization signal signature appears at 50–70 (KRTSLAGMKKLIPGAHFEKRR). The For DNA cleavage activity role is filled by Tyr79. The short motif at 79–82 (YSMK) is the RCR-3 element. Asp84 provides a ligand contact to a divalent metal cation. Residues 96-102 (FVPTIED) carry the Nuclear localization signal motif. 186–188 (GKT) contacts ATP.

It belongs to the nanoviridea/circoviridae replication-associated protein family. In terms of assembly, homooligomer (Potential). Rep binds to repeated DNA motifs (iterons). It depends on Mg(2+) as a cofactor. Mn(2+) serves as cofactor.

It is found in the host nucleus. The catalysed reaction is ATP + H2O = ADP + phosphate + H(+). In terms of biological role, essential for the replication of all genomic viral ssDNA (trans-replication). The closed circular ssDNA genome is first converted to a superhelical dsDNA. Rep binds a specific hairpin at the genome origin of replication. Introduces an endonucleolytic nick within the conserved sequence 5'-A[GT]TATTAC-3' in the intergenic region of the genome, thereby initiating the rolling circle replication (RCR). Following cleavage, binds covalently to the 5'-phosphate of DNA as a tyrosyl ester. The cleavage gives rise to a free 3'-OH that serves as a primer for the cellular DNA polymerase. The polymerase synthesizes the (+) strand DNA by rolling circle mechanism. After one round of replication, a Rep-catalyzed nucleotidyl transfer reaction releases a circular single-stranded virus genome, thereby terminating the replication. Displays origin-specific DNA cleavage, nucleotidyl transferase, ATPase and helicase activities. The protein is Master replication protein (DNA-R) of Cicer arietinum (Chickpea).